A 129-amino-acid polypeptide reads, in one-letter code: Succinate dehydrogenase subunit 3-2, mitochondrial (129 aa).

Residues 1–58 (MEKYQSKARFAPLSDAPFALRGALGSSNSSFNNIDHLRQSSSSGQARSYTSSPLGALR) constitute a mitochondrion transit peptide. Over residues 27 to 53 (SNSSFNNIDHLRQSSSSGQARSYTSSP) the composition is skewed to polar residues. A disordered region spans residues 27–66 (SNSSFNNIDHLRQSSSSGQARSYTSSPLGALRPKMFPSGN). His-87 lines the heme pocket. Residues 105 to 127 (IFGAALGAVIISIPLATKFSLMF) form a helical membrane-spanning segment.

In terms of assembly, component of complex II composed of eight subunits in plants: four classical SDH subunits SDH1, SDH2, SDH3 and SDH4 (a flavoprotein (FP), an iron-sulfur protein (IP), and a cytochrome b composed of a large and a small subunit.), as well as four subunits unknown in mitochondria from bacteria and heterotrophic eukaryotes. Heme is required as a cofactor.

It is found in the mitochondrion inner membrane. The protein operates within carbohydrate metabolism; tricarboxylic acid cycle. In terms of biological role, membrane-anchoring subunit of succinate dehydrogenase (SDH). The chain is Succinate dehydrogenase subunit 3-2, mitochondrial from Oryza sativa subsp. japonica (Rice).